The sequence spans 221 residues: Protein-L-isoaspartate O-methyltransferase (221 aa).

S60 is a catalytic residue.

Belongs to the methyltransferase superfamily. L-isoaspartyl/D-aspartyl protein methyltransferase family.

The protein resides in the cytoplasm. It carries out the reaction [protein]-L-isoaspartate + S-adenosyl-L-methionine = [protein]-L-isoaspartate alpha-methyl ester + S-adenosyl-L-homocysteine. In terms of biological role, catalyzes the methyl esterification of L-isoaspartyl residues in peptides and proteins that result from spontaneous decomposition of normal L-aspartyl and L-asparaginyl residues. It plays a role in the repair and/or degradation of damaged proteins. The polypeptide is Protein-L-isoaspartate O-methyltransferase (Rhodospirillum centenum (strain ATCC 51521 / SW)).